The chain runs to 75 residues: Bacteriocin lactococcin-A (75 aa).

The propeptide occupies 1–21 (MKNQLNFNIVSDEELSEANGG). Residues 30 to 52 (AAGDLYYNTNTHKYVYQQTQNAF) form a helical membrane-spanning segment.

Its subcellular location is the secreted. The protein localises to the host cell membrane. Functionally, kills Lactococci. The sequence is that of Bacteriocin lactococcin-A (lcnA) from Lactococcus lactis subsp. cremoris (Streptococcus cremoris).